Here is a 544-residue protein sequence, read N- to C-terminus: Secreted aspartic protease 9 (544 aa).

The first 17 residues, 1-17, serve as a signal peptide directing secretion; that stretch reads MRLNSVALLSLVATALA. The segment at 31-50 is disordered; it reads GESKDDLSPEDDSNPRFVKR. A Peptidase A1 domain is found at 65 to 479; sequence YMATLKIGSN…DLDDYEVSLA (415 aa). Aspartate 83 is a catalytic residue. 83-85 contacts pepstatin A; it reads DTG. Cysteines 98 and 195 form a disulfide. N-linked (GlcNAc...) asparagine glycosylation is found at asparagine 212, asparagine 240, and asparagine 252. The active site involves aspartate 371. A pepstatin A-binding site is contributed by 371–375; the sequence is DTGST. A disulfide bridge links cysteine 406 with cysteine 441. Residues asparagine 422 and asparagine 499 are each glycosylated (N-linked (GlcNAc...) asparagine). Positions 500 to 519 are disordered; the sequence is SSGSGTTSSSGTSTSTSTRH. The GPI-anchor amidated serine moiety is linked to residue serine 520. Residues 521-544 constitute a propeptide, removed in mature form; that stretch reads AGSIISKPVYGLLLSLLISCYVLV. The chain crosses the membrane as a helical span at residues 524 to 544; that stretch reads IISKPVYGLLLSLLISCYVLV.

Belongs to the peptidase A1 family. As to quaternary structure, monomer. The GPI-anchor is attached to the protein in the endoplasmic reticulum and serves to target the protein to the cell surface. There, the glucosamine-inositol phospholipid moiety is cleaved off and the GPI-modified mannoprotein is covalently attached via its lipidless GPI glycan remnant to the 1,6-beta-glucan of the outer cell wall layer.

Its subcellular location is the cell membrane. The protein localises to the secreted. The protein resides in the cell wall. It catalyses the reaction Preferential cleavage at the carboxyl of hydrophobic amino acids, but fails to cleave 15-Leu-|-Tyr-16, 16-Tyr-|-Leu-17 and 24-Phe-|-Phe-25 of insulin B chain. Activates trypsinogen, and degrades keratin.. In terms of biological role, secreted aspartic peptidases (SAPs) are a group of ten acidic hydrolases considered as key virulence factors. These enzymes supply the fungus with nutrient amino acids as well as are able to degrade the selected host's proteins involved in the immune defense. Moreover, acts toward human hemoglobin though limited proteolysis to generate a variety of antimicrobial hemocidins, enabling to compete with the other microorganisms of the same physiological niche using the microbicidal peptides generated from the host protein. Plays a key role in defense against host by cleaving histatin-5 (Hst 5), a peptide from human saliva that carries out fungicidal activity. The cleavage rate decreases in an order of SAP2 &gt; SAP9 &gt; SAP3 &gt; SAP7 &gt; SAP4 &gt; SAP1 &gt; SAP8. The first cleavage occurs between residues 'Lys-17' and 'His-18' of Hst 5, giving DSHAKRHHGYKRKFHEK and HHSHRGY peptides. Simultaneously, the DSHAKRHHGYKRK peptide is also formed. Further fragmentation by SAP9 results in FHEK product. The chain is Secreted aspartic protease 9 from Candida albicans (strain SC5314 / ATCC MYA-2876) (Yeast).